A 312-amino-acid chain; its full sequence is Apolipoprotein E (312 aa).

A signal peptide spans 1 to 18; it reads MKALWAVLLATLLTGCLA. Repeat copies occupy residues 72-93, 94-115, 116-137, 138-159, 160-181, 182-203, 204-225, and 226-247. Residues 72–247 are 8 X 22 AA approximate tandem repeats; that stretch reads VLMEDTMTEV…RLEEMREHME (176 aa). At Met135 the chain carries Methionine sulfoxide. Residues 150 to 160 form an LDL and other lipoprotein receptors binding region; sequence HLRKMRKRLMR. Positions 150-160 are LDL receptor binding; the sequence is HLRKMRKRLMR. 154-157 provides a ligand contact to heparin; the sequence is MRKR. The segment at 202 to 282 is lipid-binding and lipoprotein association; it reads TANLGAGAAQ…SWFEPLVEDM (81 aa). 221–228 serves as a coordination point for heparin; that stretch reads SERLRGRL. A homooligomerization region spans residues 258 to 312; that stretch reads QQIRLQAEIFQARLKSWFEPLVEDMHRQLANLVEKIQSSVATNSVLSTSVPQENQ. The tract at residues 270–282 is specificity for association with VLDL; the sequence is RLKSWFEPLVEDM.

The protein belongs to the apolipoprotein A1/A4/E family. Homotetramer. May interact with ABCA1; functionally associated with ABCA1 in the biogenesis of HDLs. May interact with APP/A4 amyloid-beta peptide; the interaction is extremely stable in vitro but its physiological significance is unclear. May interact with MAPT. May interact with MAP2. In the cerebrospinal fluid, interacts with secreted SORL1. Interacts with PMEL; this allows the loading of PMEL luminal fragment on ILVs to induce fibril nucleation. APOE exists as multiple glycosylated and sialylated glycoforms within cells and in plasma. The extent of glycosylation and sialylation are tissue and context specific. In terms of processing, glycated in plasma VLDL. Post-translationally, phosphorylated by FAM20C in the extracellular medium.

Its subcellular location is the secreted. It is found in the extracellular space. It localises to the extracellular matrix. The protein localises to the extracellular vesicle. The protein resides in the endosome. Its subcellular location is the multivesicular body. In terms of biological role, APOE is an apolipoprotein, a protein associating with lipid particles, that mainly functions in lipoprotein-mediated lipid transport between organs via the plasma and interstitial fluids. APOE is a core component of plasma lipoproteins and is involved in their production, conversion and clearance. Apolipoproteins are amphipathic molecules that interact both with lipids of the lipoprotein particle core and the aqueous environment of the plasma. As such, APOE associates with chylomicrons, chylomicron remnants, very low density lipoproteins (VLDL) and intermediate density lipoproteins (IDL) but shows a preferential binding to high-density lipoproteins (HDL). It also binds a wide range of cellular receptors including the LDL receptor/LDLR, the LDL receptor-related proteins LRP1, LRP2 and LRP8 and the very low-density lipoprotein receptor/VLDLR that mediate the cellular uptake of the APOE-containing lipoprotein particles. Finally, APOE also has a heparin-binding activity and binds heparan-sulfate proteoglycans on the surface of cells, a property that supports the capture and the receptor-mediated uptake of APOE-containing lipoproteins by cells. A main function of APOE is to mediate lipoprotein clearance through the uptake of chylomicrons, VLDLs, and HDLs by hepatocytes. APOE is also involved in the biosynthesis by the liver of VLDLs as well as their uptake by peripheral tissues ensuring the delivery of triglycerides and energy storage in muscle, heart and adipose tissues. By participating in the lipoprotein-mediated distribution of lipids among tissues, APOE plays a critical role in plasma and tissues lipid homeostasis. APOE is also involved in two steps of reverse cholesterol transport, the HDLs-mediated transport of cholesterol from peripheral tissues to the liver, and thereby plays an important role in cholesterol homeostasis. First, it is functionally associated with ABCA1 in the biogenesis of HDLs in tissues. Second, it is enriched in circulating HDLs and mediates their uptake by hepatocytes. APOE also plays an important role in lipid transport in the central nervous system, regulating neuron survival and sprouting. This is Apolipoprotein E (Apoe) from Arvicanthis niloticus (African grass rat).